A 1547-amino-acid chain; its full sequence is Tubby-related protein 4 (1547 aa).

3 WD repeats span residues 80–119, 123–162, and 165–204; these read GHNS…WSVE, DRGA…HWSS, and NLES…LAHV. The SOCS box domain occupies 364–414; sequence ALYVVRVEHRVSSLQLLCQQAIASTLREDKDVNKLTLPPRLCSYLSTAFIP. The disordered stretch occupies residues 530-580; that stretch reads SPKISRSSKSPKLPRISIEARKSPKLPRAAQEISRSPRLPMRKPSMGSPSL. The span at 533–546 shows a compositional bias: low complexity; the sequence is ISRSSKSPKLPRIS. Ser-577 carries the post-translational modification Phosphoserine. An asymmetric dimethylarginine mark is found at Arg-949 and Arg-954. A phosphoserine mark is found at Ser-1347 and Ser-1378. Residues 1374 to 1414 form a disordered region; it reads SLISSPRLGREKKKVKSQKDQLKSKKLNKTNEFQDSSESEP. The TUB stretch occupies residues 1436 to 1547; sequence SKRSLRTASE…ALANVTQRLK (112 aa).

Belongs to the TUB family.

It is found in the cytoplasm. The protein operates within protein modification; protein ubiquitination. Its function is as follows. May be a substrate-recognition component of a SCF-like ECS (Elongin-Cullin-SOCS-box protein) E3 ubiquitin ligase complex which mediates the ubiquitination and subsequent proteasomal degradation of target proteins. In Mus musculus (Mouse), this protein is Tubby-related protein 4 (Tulp4).